The chain runs to 386 residues: Mannitol-1-phosphate 5-dehydrogenase (386 aa).

NAD(+) is bound at residue 6 to 17; sequence AIHFGGGNIGRG. The active site involves K214.

The protein belongs to the mannitol dehydrogenase family. As to quaternary structure, monomer.

It catalyses the reaction D-mannitol 1-phosphate + NAD(+) = beta-D-fructose 6-phosphate + NADH + H(+). Its function is as follows. Catalyzes the NAD(H)-dependent interconversion of D-fructose 6-phosphate and D-mannitol 1-phosphate in the mannitol metabolic pathway. Plays a key role in liamocins biosynthesis by providing the mannitol moity that is linked to 3,5-dihydroxydecanoic acid (provided by the HR-PKS PKS1) via ester bond formation catalyzed by the esterase EST1. The polypeptide is Mannitol-1-phosphate 5-dehydrogenase (Aureobasidium melanogenum (Aureobasidium pullulans var. melanogenum)).